Consider the following 520-residue polypeptide: Laccase-1 (520 aa).

Positions 1–21 are cleaved as a signal peptide; sequence MSRFHSLLAFVVASLTAVAHA. 2 consecutive Plastocyanin-like domains span residues 23 to 148 and 160 to 302; these read IGPV…FVVY and VDND…ILRY. 2 N-linked (GlcNAc...) asparagine glycosylation sites follow: N72 and N75. The Cu cation site is built by H85, H87, H130, and H132. Disulfide bonds link C106–C509 and C138–C226. 4 N-linked (GlcNAc...) asparagine glycosylation sites follow: N229, N238, N354, and N361. Residues 369–491 form the Plastocyanin-like 3 domain; that stretch reads TVPVLLQIIS…AGFAVVFAED (123 aa). Positions 416, 419, 421, 473, 474, 475, and 479 each coordinate Cu cation.

This sequence belongs to the multicopper oxidase family. Homodimer. Requires Cu cation as cofactor.

The protein localises to the secreted. It carries out the reaction 4 hydroquinone + O2 = 4 benzosemiquinone + 2 H2O. In terms of biological role, lignin degradation and detoxification of lignin-derived products. This chain is Laccase-1, found in Trametes villosa (White-rot fungus).